Here is a 324-residue protein sequence, read N- to C-terminus: Acetyl-coenzyme A carboxylase carboxyl transferase subunit alpha (324 aa).

One can recognise a CoA carboxyltransferase C-terminal domain in the interval 37–291 (KLERRLDKLK…QNFILQEWLR (255 aa)).

This sequence belongs to the AccA family. In terms of assembly, acetyl-CoA carboxylase is a heterohexamer composed of biotin carboxyl carrier protein (AccB), biotin carboxylase (AccC) and two subunits each of ACCase subunit alpha (AccA) and ACCase subunit beta (AccD).

It localises to the cytoplasm. It catalyses the reaction N(6)-carboxybiotinyl-L-lysyl-[protein] + acetyl-CoA = N(6)-biotinyl-L-lysyl-[protein] + malonyl-CoA. It functions in the pathway lipid metabolism; malonyl-CoA biosynthesis; malonyl-CoA from acetyl-CoA: step 1/1. In terms of biological role, component of the acetyl coenzyme A carboxylase (ACC) complex. First, biotin carboxylase catalyzes the carboxylation of biotin on its carrier protein (BCCP) and then the CO(2) group is transferred by the carboxyltransferase to acetyl-CoA to form malonyl-CoA. The polypeptide is Acetyl-coenzyme A carboxylase carboxyl transferase subunit alpha (Chlamydia caviae (strain ATCC VR-813 / DSM 19441 / 03DC25 / GPIC) (Chlamydophila caviae)).